We begin with the raw amino-acid sequence, 519 residues long: Galactokinase (519 aa).

Residues Arg47, Glu53, His54, and Asp56 each contribute to the alpha-D-galactose site. 4 residues coordinate ATP: Gly159, Gly161, Ser163, and Ser164. An alpha-D-galactose-binding site is contributed by Asp209. Asp209 (proton acceptor) is an active-site residue. Residues Asn257 and Lys258 each coordinate ATP. Tyr266 lines the alpha-D-galactose pocket.

The protein belongs to the GHMP kinase family. GalK subfamily.

It carries out the reaction alpha-D-galactose + ATP = alpha-D-galactose 1-phosphate + ADP + H(+). It participates in carbohydrate metabolism; galactose metabolism. Galactokinase is a key enzyme in the galactose metabolism where it catalyzes the conversion of alpha-D-galactose to galactose 1-phosphate. Can also induce the transcription of the gal genes in response to the organism being challenged with galactose as the sole source of carbon. The chain is Galactokinase (gal1) from Schizosaccharomyces pombe (strain 972 / ATCC 24843) (Fission yeast).